The primary structure comprises 288 residues: Wilms tumor protein homolog (288 aa).

The disordered stretch occupies residues 1-21 (QGYSTVAFDGPPSYGHAPSHH). The short motif at 90-98 (MTWNQMNLG) is the 9aaTAD element. 3 C2H2-type zinc fingers span residues 162 to 186 (FMCA…SRKH), 192 to 216 (YQCD…QRRH), and 222 to 244 (FQCK…TRTH). Important for interaction with target DNA stretches follow at residues 206-220 (SDQL…TGVK) and 232-240 (SRSDHLKTH). The KTS motif signature appears at 247–249 (KTS). The C2H2-type 4 zinc finger occupies 253-277 (FSCRWPSCQKKFARSDELVRHHNMH).

Belongs to the EGR C2H2-type zinc-finger protein family.

Its subcellular location is the nucleus speckle. The protein resides in the nucleus. It localises to the nucleoplasm. The protein localises to the cytoplasm. Transcription factor that plays an important role in cellular development and cell survival. Recognizes and binds to the DNA sequence 5'-GCG(T/G)GGGCG-3'. Regulates the expression of numerous target genes. Plays an essential role for development of the urogenital system. It has a tumor suppressor as well as an oncogenic role in tumor formation. Function may be isoform-specific: isoforms lacking the KTS motif may act as transcription factors. Isoforms containing the KTS motif may bind mRNA and play a role in mRNA metabolism or splicing. The chain is Wilms tumor protein homolog (WT1) from Alligator mississippiensis (American alligator).